Consider the following 61-residue polypeptide: Double gene block protein 1 (61 aa).

Residues 1–45 (MDIESEVPVVGKQMLAGNRGKQKTRRSVAKDAIRKPASDSTNGGN) form a disordered region. The RNA-binding stretch occupies residues 17 to 35 (GNRGKQKTRRSVAKDAIRK). The span at 28–37 (VAKDAIRKPA) shows a compositional bias: basic and acidic residues.

It belongs to the carmovirus double gene block protein 1 family. In terms of assembly, homodimer.

In terms of biological role, cell-to-cell movement. Displays RNA-binding activity. In Carnation mottle virus (CarMV), this protein is Double gene block protein 1.